Consider the following 208-residue polypeptide: FMN-dependent NADH:quinone oxidoreductase (208 aa).

FMN contacts are provided by residues Ser9, 15–17, 96–99, and 140–143; these read SVS, MYNF, and TRGG.

It belongs to the azoreductase type 1 family. In terms of assembly, homodimer. Requires FMN as cofactor.

It catalyses the reaction 2 a quinone + NADH + H(+) = 2 a 1,4-benzosemiquinone + NAD(+). The enzyme catalyses N,N-dimethyl-1,4-phenylenediamine + anthranilate + 2 NAD(+) = 2-(4-dimethylaminophenyl)diazenylbenzoate + 2 NADH + 2 H(+). Quinone reductase that provides resistance to thiol-specific stress caused by electrophilic quinones. Its function is as follows. Also exhibits azoreductase activity. Catalyzes the reductive cleavage of the azo bond in aromatic azo compounds to the corresponding amines. The polypeptide is FMN-dependent NADH:quinone oxidoreductase (Azospirillum brasilense).